A 159-amino-acid polypeptide reads, in one-letter code: Glutamate-rich protein GrpA (159 aa).

This Alkalihalophilus pseudofirmus (strain ATCC BAA-2126 / JCM 17055 / OF4) (Bacillus pseudofirmus) protein is Glutamate-rich protein GrpA (grpA).